Consider the following 247-residue polypeptide: Cell division protein ZapD (247 aa).

It belongs to the ZapD family. Interacts with FtsZ.

The protein localises to the cytoplasm. Cell division factor that enhances FtsZ-ring assembly. Directly interacts with FtsZ and promotes bundling of FtsZ protofilaments, with a reduction in FtsZ GTPase activity. This chain is Cell division protein ZapD, found in Salmonella arizonae (strain ATCC BAA-731 / CDC346-86 / RSK2980).